We begin with the raw amino-acid sequence, 436 residues long: Alpha-2 adrenergic receptor (436 aa).

The Extracellular portion of the chain corresponds to 1-27 (MDVTQSNATKDDANITVTPWPYTETAA). Asparagine 7 and asparagine 14 each carry an N-linked (GlcNAc...) asparagine glycan. The chain crosses the membrane as a helical span at residues 28 to 52 (AFIILVVSVIILVSIVGNVLVIVAV). The Cytoplasmic segment spans residues 53-64 (LTSRALRAPQNL). Residues 65 to 90 (FLVSLACADILVATLVIPFSLANEIM) traverse the membrane as a helical segment. At 91 to 100 (GYWFFGSTWC) the chain is on the extracellular side. Cysteine 100 and cysteine 173 are disulfide-bonded. The chain crosses the membrane as a helical span at residues 101–123 (AFYLALDVLFCTSSIVHLCAISL). The Cytoplasmic segment spans residues 124-144 (DRYWSVTKAVSYNLKRTPKRI). A helical membrane pass occupies residues 145–167 (KSMIAVVWVISAVISFPPLIMTK). Over 168–178 (HDEKECLINDE) the chain is Extracellular. A helical transmembrane segment spans residues 179–202 (TWYILSSSLVSFFAPGFIMITVYC). Topologically, residues 203 to 329 (KIYRVAKQRS…QMREKRFTFV (127 aa)) are cytoplasmic. Positions 238–280 (KFEKESPSSNSSESNQRQEELDDIDLEESATSDNKPKSSRFSN) are disordered. A compositionally biased stretch (acidic residues) spans 257–267 (ELDDIDLEESA). Residues 330–353 (LTVVMGVFVLCWFPFFFTYSLHAI) traverse the membrane as a helical segment. Over 354-366 (CGDSCEPPEALFK) the chain is Extracellular. A helical transmembrane segment spans residues 367–387 (LFFWIGYCNSSVNPIIYTIFN). Residues 388-436 (RDFRKAFKKICLLDCAAHLRDSCLGTLGRLNAKCIFECHQKSNQEETAN) lie on the Cytoplasmic side of the membrane.

Belongs to the G-protein coupled receptor 1 family.

It is found in the cell membrane. Its function is as follows. Alpha-2 adrenergic receptors mediate the catecholamine-induced inhibition of adenylate cyclase through the action of G proteins. In Carassius auratus (Goldfish), this protein is Alpha-2 adrenergic receptor.